The sequence spans 221 residues: UPF0319 protein NTHI1987 (221 aa).

A signal peptide spans M1–A21.

This sequence belongs to the UPF0319 family.

The protein is UPF0319 protein NTHI1987 of Haemophilus influenzae (strain 86-028NP).